We begin with the raw amino-acid sequence, 228 residues long: 7-cyano-7-deazaguanine synthase (228 aa).

Residue 11–21 (LSGGLDSATVL) coordinates ATP. Residues C191, C201, C204, and C207 each contribute to the Zn(2+) site.

The protein belongs to the QueC family. Requires Zn(2+) as cofactor.

The enzyme catalyses 7-carboxy-7-deazaguanine + NH4(+) + ATP = 7-cyano-7-deazaguanine + ADP + phosphate + H2O + H(+). Its pathway is purine metabolism; 7-cyano-7-deazaguanine biosynthesis. Functionally, catalyzes the ATP-dependent conversion of 7-carboxy-7-deazaguanine (CDG) to 7-cyano-7-deazaguanine (preQ(0)). The polypeptide is 7-cyano-7-deazaguanine synthase (Magnetococcus marinus (strain ATCC BAA-1437 / JCM 17883 / MC-1)).